The chain runs to 765 residues: Endothelin-converting enzyme 2 (765 aa).

Topologically, residues 1 to 60 (MSVALQELGGGGNMVEYKRATLRDEDAPETPVEGGASPDAVEAGFRKRTSRLLGLHTQLE) are cytoplasmic. Residues 61-81 (LVLAGVSLLLAALLLGCLVAL) traverse the membrane as a helical; Signal-anchor for type II membrane protein segment. Topologically, residues 82–765 (GVQYHRDPSH…MNSGQLCEVW (684 aa)) are lumenal. Positions 93 to 765 (TCLTEACIRV…MNSGQLCEVW (673 aa)) constitute a Peptidase M13 domain. Intrachain disulfides connect Cys-94–Cys-99, Cys-117–Cys-750, Cys-125–Cys-710, Cys-181–Cys-430, and Cys-639–Cys-762. Asn-161, Asn-165, Asn-206, Asn-266, Asn-311, Asn-378, and Asn-534 each carry an N-linked (GlcNAc...) asparagine glycan. His-602 is a Zn(2+) binding site. The active site involves Glu-603. Position 606 (His-606) interacts with Zn(2+). 2 N-linked (GlcNAc...) asparagine glycosylation sites follow: Asn-627 and Asn-635. Glu-662 is a Zn(2+) binding site. The active-site Proton donor is Asp-666.

The protein belongs to the peptidase M13 family. It depends on Zn(2+) as a cofactor. As to expression, isoform ECE2-1 and isoform ECE2-2 are expressed in brain and adrenal gland.

The protein resides in the golgi apparatus membrane. Its subcellular location is the cytoplasmic vesicle. The protein localises to the secretory vesicle membrane. The catalysed reaction is Hydrolysis of the 21-Trp-|-Val-22 bond in big endothelin to form endothelin 1.. Its function is as follows. Converts big endothelin-1 to endothelin-1. Also involved in the processing of various neuroendocrine peptides, including neurotensin, angiotensin I, substance P, proenkephalin-derived peptides, and prodynorphin-derived peptides. May play a role in amyloid-beta processing. The sequence is that of Endothelin-converting enzyme 2 from Bos taurus (Bovine).